Here is a 249-residue protein sequence, read N- to C-terminus: Vacuolar iron transporter 1 (249 aa).

Over 1 to 36 the chain is Cytoplasmic; sequence MADGANDGGNPGAEEQQRLLDQHKEAHFTAGEIVRD. Residues 37–57 traverse the membrane as a helical segment; sequence IIIGVSDGLTVPFALAAGLSG. Residues 58 to 63 are Vacuolar-facing; sequence ANASSS. The helical transmembrane segment at 64–84 threads the bilayer; sequence IVLTAGIAEVAAGAISMGLGG. The Cytoplasmic portion of the chain corresponds to 85 to 170; the sequence is YLAAKSEADN…PKRALQSAFT (86 aa). Residues 90 to 165 are cytoplasmic metal binding domain (MBD); it reads SEADNYAREL…LEKPDPKRAL (76 aa). Fe cation is bound by residues Glu102, Glu105, Glu113, Glu116, Met149, and Glu153. Residues 171–191 traverse the membrane as a helical segment; it reads IAIAYVLGGLVPLIPYMFIPV. The Vacuolar portion of the chain corresponds to 192–194; sequence ARK. The helical transmembrane segment at 195–215 threads the bilayer; it reads AVVASVILTLMALLIFGYAKG. At 216–226 the chain is on the cytoplasmic side; it reads YFTDNKPFKSA. A helical transmembrane segment spans residues 227–247; that stretch reads LQTALIGAIASAAAFGMAKAV. Residues 248-249 lie on the Vacuolar side of the membrane; sequence QS.

The protein belongs to the CCC1 family. In terms of assembly, homodimer. The dimeric interaction is mediated by both the transmembrane domains (TMDs) and the cytoplasmic metal binding domain (MBD).

It localises to the vacuole membrane. The catalysed reaction is Fe(2+)(in) = Fe(2+)(out). Its activity is regulated as follows. Transport of iron ions is inhibited by zinc ions. Functionally, vacuolar iron transporter involved in the transfer of iron ions from the cytosol to the vacuole for intracellular iron storage. Can transport cobalt ions from the cytosol to the vacuole. In Eucalyptus grandis (Flooded gum), this protein is Vacuolar iron transporter 1.